Here is a 195-residue protein sequence, read N- to C-terminus: Peptidyl-tRNA hydrolase (195 aa).

Tyrosine 17 serves as a coordination point for tRNA. Histidine 22 (proton acceptor) is an active-site residue. TRNA is bound by residues phenylalanine 68, asparagine 70, and asparagine 116.

It belongs to the PTH family. In terms of assembly, monomer.

It is found in the cytoplasm. It carries out the reaction an N-acyl-L-alpha-aminoacyl-tRNA + H2O = an N-acyl-L-amino acid + a tRNA + H(+). Functionally, hydrolyzes ribosome-free peptidyl-tRNAs (with 1 or more amino acids incorporated), which drop off the ribosome during protein synthesis, or as a result of ribosome stalling. Its function is as follows. Catalyzes the release of premature peptidyl moieties from peptidyl-tRNA molecules trapped in stalled 50S ribosomal subunits, and thus maintains levels of free tRNAs and 50S ribosomes. The protein is Peptidyl-tRNA hydrolase of Shewanella denitrificans (strain OS217 / ATCC BAA-1090 / DSM 15013).